Here is a 556-residue protein sequence, read N- to C-terminus: DNA ligase B (556 aa).

The active-site N6-AMP-lysine intermediate is Lys122.

It belongs to the NAD-dependent DNA ligase family. LigB subfamily.

The enzyme catalyses NAD(+) + (deoxyribonucleotide)n-3'-hydroxyl + 5'-phospho-(deoxyribonucleotide)m = (deoxyribonucleotide)n+m + AMP + beta-nicotinamide D-nucleotide.. Its function is as follows. Catalyzes the formation of phosphodiester linkages between 5'-phosphoryl and 3'-hydroxyl groups in double-stranded DNA using NAD as a coenzyme and as the energy source for the reaction. The protein is DNA ligase B of Enterobacter sp. (strain 638).